A 363-amino-acid polypeptide reads, in one-letter code: MSGNTYGKLFTVTSAGESHGPALVAIVDGCPPGLELSAQDLQRDLDRRKPGTSRHTTQRQEADEVEILSGVFEGRTTGTPIGLLIRNTDQKSKDYSAIKDLFRPAHADYTYHHKYGVRDYRGGGRSSARETAMRVAAGAIAKKYLAGLGIRVRGYMSQLGPIEIPFKTWDSVERNAFFSPDPDKVPELEAYMDQLRRDQDSIGAKITVVAEGVPPGLGEPIFDRLDAELAHALMSINAVKGVEIGAGFASIAQRGTEHRDELTPQGFLSNNAGGILGGISSGQPIVAHLALKPTSSITTPGRSIDTAGEPVDMITKGRHDPCVGIRATPIAEAMMAIVLLDQLLRQRGQNADVRVDTPILPQL.

Residues Arg-48 and Arg-54 each coordinate NADP(+). FMN-binding positions include 125-127, 237-238, Gly-277, 292-296, and Arg-318; these read RSS, NA, and KPTSS.

It belongs to the chorismate synthase family. In terms of assembly, homotetramer. FMNH2 serves as cofactor.

It carries out the reaction 5-O-(1-carboxyvinyl)-3-phosphoshikimate = chorismate + phosphate. It functions in the pathway metabolic intermediate biosynthesis; chorismate biosynthesis; chorismate from D-erythrose 4-phosphate and phosphoenolpyruvate: step 7/7. Catalyzes the anti-1,4-elimination of the C-3 phosphate and the C-6 proR hydrogen from 5-enolpyruvylshikimate-3-phosphate (EPSP) to yield chorismate, which is the branch point compound that serves as the starting substrate for the three terminal pathways of aromatic amino acid biosynthesis. This reaction introduces a second double bond into the aromatic ring system. The sequence is that of Chorismate synthase from Pseudomonas paraeruginosa (strain DSM 24068 / PA7) (Pseudomonas aeruginosa (strain PA7)).